The sequence spans 425 residues: Histidinol dehydrogenase (425 aa).

NAD(+)-binding residues include Tyr-124, Gln-184, and Asn-207. Substrate-binding residues include Ser-230, Gln-252, and His-255. Zn(2+) contacts are provided by Gln-252 and His-255. Catalysis depends on proton acceptor residues Glu-321 and His-322. His-322, Asp-355, Glu-409, and His-414 together coordinate substrate. Asp-355 contributes to the Zn(2+) binding site. Residue His-414 coordinates Zn(2+).

This sequence belongs to the histidinol dehydrogenase family. Zn(2+) is required as a cofactor.

The catalysed reaction is L-histidinol + 2 NAD(+) + H2O = L-histidine + 2 NADH + 3 H(+). It participates in amino-acid biosynthesis; L-histidine biosynthesis; L-histidine from 5-phospho-alpha-D-ribose 1-diphosphate: step 9/9. Functionally, catalyzes the sequential NAD-dependent oxidations of L-histidinol to L-histidinaldehyde and then to L-histidine. In Halobacterium salinarum (strain ATCC 700922 / JCM 11081 / NRC-1) (Halobacterium halobium), this protein is Histidinol dehydrogenase.